The sequence spans 363 residues: S-adenosylmethionine:tRNA ribosyltransferase-isomerase (363 aa).

The protein belongs to the QueA family. As to quaternary structure, monomer.

The protein localises to the cytoplasm. The enzyme catalyses 7-aminomethyl-7-carbaguanosine(34) in tRNA + S-adenosyl-L-methionine = epoxyqueuosine(34) in tRNA + adenine + L-methionine + 2 H(+). It functions in the pathway tRNA modification; tRNA-queuosine biosynthesis. Functionally, transfers and isomerizes the ribose moiety from AdoMet to the 7-aminomethyl group of 7-deazaguanine (preQ1-tRNA) to give epoxyqueuosine (oQ-tRNA). This is S-adenosylmethionine:tRNA ribosyltransferase-isomerase from Haemophilus influenzae (strain 86-028NP).